Consider the following 315-residue polypeptide: Methionyl-tRNA formyltransferase (315 aa).

Residue Ser-113–Pro-116 participates in (6S)-5,6,7,8-tetrahydrofolate binding.

Belongs to the Fmt family.

The catalysed reaction is L-methionyl-tRNA(fMet) + (6R)-10-formyltetrahydrofolate = N-formyl-L-methionyl-tRNA(fMet) + (6S)-5,6,7,8-tetrahydrofolate + H(+). In terms of biological role, attaches a formyl group to the free amino group of methionyl-tRNA(fMet). The formyl group appears to play a dual role in the initiator identity of N-formylmethionyl-tRNA by promoting its recognition by IF2 and preventing the misappropriation of this tRNA by the elongation apparatus. This is Methionyl-tRNA formyltransferase from Escherichia coli O139:H28 (strain E24377A / ETEC).